We begin with the raw amino-acid sequence, 211 residues long: Metalloproteinase inhibitor 3 (211 aa).

A signal peptide spans 1 to 23 (MTPWLGLVVLLSCWSLGHWGTEA). C24 contributes to the Zn(2+) binding site. Involved in metalloproteinase-binding stretches follow at residues 24 to 27 (CTCS) and 88 to 89 (ES). 6 cysteine pairs are disulfide-bonded: C24/C91, C26/C118, C36/C143, C145/C192, C150/C155, and C163/C184. The 120-residue stretch at 24–143 (CTCSPSHPQD…GLNYRYHLGC (120 aa)) folds into the NTR domain. Residues 105–188 (TGRVYEGKMY…SKHYACIRQK (84 aa)) are mediates interaction with EFEMP1.

Belongs to the protease inhibitor I35 (TIMP) family. As to quaternary structure, interacts with EFEMP1. Interacts with KDR.

The protein localises to the secreted. Its subcellular location is the extracellular space. It is found in the extracellular matrix. Functionally, mediates a variety of processes including matrix regulation and turnover, inflammation, and angiogenesis, through reversible inhibition of zinc protease superfamily enzymes, primarily matrix metalloproteinases (MMPs). Regulates extracellular matrix (ECM) remodeling through inhibition of matrix metalloproteinases (MMP) including MMP-1, MMP-2, MMP-3, MMP-7, MMP-9, MMP-13, MMP-14 and MMP-15. Additionally, modulates the processing of amyloid precursor protein (APP) and apolipoprotein E receptor ApoER2 by inhibiting two alpha-secretases ADAM10 and ADAM17. Functions as a tumor suppressor and a potent inhibitor of angiogenesis. Exerts its anti-angiogenic effect by directly interacting with vascular endothelial growth factor (VEGF) receptor-2/KDR, preventing its binding to the VEGFA ligand. Selectively induces apoptosis in angiogenic endothelial cells through a caspase-independent cell death pathway. Mechanistically, inhibits matrix-induced focal adhesion kinase PTK2 tyrosine phosphorylation and association with paxillin/PXN and disrupts the incorporation of ITGB3, PTK2 and PXN into focal adhesion contacts on the matrix. The protein is Metalloproteinase inhibitor 3 (Timp3) of Rattus norvegicus (Rat).